Here is a 231-residue protein sequence, read N- to C-terminus: Phosphatidate cytidylyltransferase (231 aa).

The next 6 helical transmembrane spans lie at 33 to 53 (FVVA…LVAI), 67 to 87 (IMYL…LIFL), 95 to 115 (WLIM…MIGG), 133 to 153 (WSGL…ISFI), 167 to 187 (IYLF…DLFI), and 206 to 226 (HGGV…LFFI).

This sequence belongs to the CDS family.

The protein localises to the cell membrane. It catalyses the reaction a 1,2-diacyl-sn-glycero-3-phosphate + CTP + H(+) = a CDP-1,2-diacyl-sn-glycerol + diphosphate. The protein operates within phospholipid metabolism; CDP-diacylglycerol biosynthesis; CDP-diacylglycerol from sn-glycerol 3-phosphate: step 3/3. The polypeptide is Phosphatidate cytidylyltransferase (cdsA) (Rickettsia bellii (strain RML369-C)).